The sequence spans 425 residues: Serine--tRNA ligase (425 aa).

231–233 (TAE) serves as a coordination point for L-serine. ATP is bound by residues 262–264 (RTE) and Val278. Glu285 is an L-serine binding site. Residue 349 to 352 (EVTS) coordinates ATP. Residue Thr384 participates in L-serine binding.

Belongs to the class-II aminoacyl-tRNA synthetase family. Type-1 seryl-tRNA synthetase subfamily. As to quaternary structure, homodimer. The tRNA molecule binds across the dimer.

Its subcellular location is the cytoplasm. The catalysed reaction is tRNA(Ser) + L-serine + ATP = L-seryl-tRNA(Ser) + AMP + diphosphate + H(+). It catalyses the reaction tRNA(Sec) + L-serine + ATP = L-seryl-tRNA(Sec) + AMP + diphosphate + H(+). Its pathway is aminoacyl-tRNA biosynthesis; selenocysteinyl-tRNA(Sec) biosynthesis; L-seryl-tRNA(Sec) from L-serine and tRNA(Sec): step 1/1. Its function is as follows. Catalyzes the attachment of serine to tRNA(Ser). Is also able to aminoacylate tRNA(Sec) with serine, to form the misacylated tRNA L-seryl-tRNA(Sec), which will be further converted into selenocysteinyl-tRNA(Sec). This is Serine--tRNA ligase from Dictyoglomus turgidum (strain DSM 6724 / Z-1310).